Here is a 437-residue protein sequence, read N- to C-terminus: Major royal jelly protein 6 (437 aa).

Positions 1–20 (MTNWLLLIVCLSIACQDVTS) are cleaved as a signal peptide. N-linked (GlcNAc...) asparagine glycosylation is found at Asn-78, Asn-164, Asn-181, Asn-201, and Asn-324.

This sequence belongs to the major royal jelly protein family. Found in and secreted from the hypopharyngeal glands of the worker honey bee (at protein level); expression peaks at 20 days post eclosion. Expressed in the spermatheca of adult queen bees (at protein level); Expression levels are higher in mated queens than in virgin queens. Expressed at low level in the brains of adult worker bees. Protein abundance does not seem to correlate with transcript abundance.

It is found in the secreted. Component of royal jelly, a substance produced in the hypopharyngeal gland containing proteins, free amino acids, fatty acids, sugars and other nutrients, which is fed to developing larvae by worker nurse bees. All larvae are fed some royal jelly (also known as worker jelly) early in their development but it forms the principal source of nutrition for larvae destined to become queen bees. Produced in the spermatheca of adult queen bees, along with other major royal jelly proteins, where it may act as a nutrient supply for sperm stored by mated queens, or be involved in energy metabolism. In Apis mellifera (Honeybee), this protein is Major royal jelly protein 6.